The chain runs to 382 residues: Layilin (382 aa).

An N-terminal signal peptide occupies residues 1-21 (MRPGTALQAVLLAVLLVGLRA). Residues 22–235 (ATGRLLSASD…SREAALNLAY (214 aa)) lie on the Extracellular side of the membrane. Residues 45-185 (TQRPCYKVIY…CNMKNNFICK (141 aa)) form the C-type lectin domain. 2 cysteine pairs are disulfide-bonded: cysteine 71-cysteine 184 and cysteine 150-cysteine 176. N-linked (GlcNAc...) asparagine glycosylation is present at asparagine 117. The chain crosses the membrane as a helical span at residues 236–256 (ILIPSIPLLLLLVVTTVVCWV). Residues 257 to 382 (WICRKRKREQ…GWVENEIYGY (126 aa)) lie on the Cytoplasmic side of the membrane. The disordered stretch occupies residues 266-285 (QPDPSTKKQHTIWPSPHQGN). Phosphoserine is present on residues serine 286 and serine 299. The segment at 330–374 (DYDNMAVNPSESGFVTLVSVESGFVTNDIYEFSPDQMGRSKESGW) is interaction with NF2. The interaction with TLN1 stretch occupies residues 337 to 382 (NPSESGFVTLVSVESGFVTNDIYEFSPDQMGRSKESGWVENEIYGY). Tandem repeats lie at residues 340 to 344 (ESGFV), 350 to 354 (ESGFV), 356 to 359 (NDIY), 371 to 375 (ESGWV), and 377 to 380 (NEIY). The interval 340-375 (ESGFVTLVSVESGFVTNDIYEFSPDQMGRSKESGWV) is 3 X 5 AA repeats of E-S-G-X-V. The interval 356-380 (NDIYEFSPDQMGRSKESGWVENEIY) is 2 X 4 AA repeats of N-X-I-Y.

As to quaternary structure, interacts with NF2, RDX and TLN1.

It is found in the membrane. Functionally, receptor for hyaluronate. The sequence is that of Layilin (LAYN) from Homo sapiens (Human).